A 215-amino-acid polypeptide reads, in one-letter code: Adenylate kinase (215 aa).

10–15 contributes to the ATP binding site; it reads GAGKGT. The tract at residues 30–59 is NMP; the sequence is STGDMFRAAMKNETEMGKLAKSFIDKGELV. Residues Thr-31, Arg-36, 57-59, 86-89, and Gln-93 contribute to the AMP site; these read ELV and GYPR. The LID stretch occupies residues 127–165; it reads GRYICRNCGATYHKIFNPTKVEGVCDVCGSHDLYQRADD. Arg-128 is an ATP binding site. The Zn(2+) site is built by Cys-131 and Cys-134. 137-138 contributes to the ATP binding site; it reads TY. Zn(2+)-binding residues include Cys-151 and Cys-154. Residues Arg-162 and Arg-173 each contribute to the AMP site. Residue Gln-201 coordinates ATP.

It belongs to the adenylate kinase family. In terms of assembly, monomer.

The protein resides in the cytoplasm. It catalyses the reaction AMP + ATP = 2 ADP. It functions in the pathway purine metabolism; AMP biosynthesis via salvage pathway; AMP from ADP: step 1/1. Its function is as follows. Catalyzes the reversible transfer of the terminal phosphate group between ATP and AMP. Plays an important role in cellular energy homeostasis and in adenine nucleotide metabolism. This Lactococcus lactis subsp. lactis (strain IL1403) (Streptococcus lactis) protein is Adenylate kinase.